A 451-amino-acid chain; its full sequence is UDP-N-acetylmuramate--L-alanine ligase (451 aa).

Residue 110 to 116 coordinates ATP; that stretch reads GTHGKTT.

The protein belongs to the MurCDEF family.

The protein resides in the cytoplasm. The enzyme catalyses UDP-N-acetyl-alpha-D-muramate + L-alanine + ATP = UDP-N-acetyl-alpha-D-muramoyl-L-alanine + ADP + phosphate + H(+). The protein operates within cell wall biogenesis; peptidoglycan biosynthesis. In terms of biological role, cell wall formation. The protein is UDP-N-acetylmuramate--L-alanine ligase of Francisella tularensis subsp. tularensis (strain SCHU S4 / Schu 4).